Reading from the N-terminus, the 43-residue chain is Photosystem II reaction center protein Psb30 (43 aa).

Residues 15 to 35 (VIFQLTFVSLILISGPVVIFL) form a helical membrane-spanning segment.

It belongs to the Psb30/Ycf12 family. PSII is composed of 1 copy each of membrane proteins PsbA, PsbB, PsbC, PsbD, PsbE, PsbF, PsbH, PsbI, PsbJ, PsbK, PsbL, PsbM, PsbT, PsbX, PsbY, PsbZ, Psb30/Ycf12, peripheral proteins PsbO, CyanoQ (PsbQ), PsbU, PsbV and a large number of cofactors. It forms dimeric complexes.

It localises to the cellular thylakoid membrane. A core subunit of photosystem II (PSII), probably helps stabilize the reaction center. This Picosynechococcus sp. (strain ATCC 27264 / PCC 7002 / PR-6) (Agmenellum quadruplicatum) protein is Photosystem II reaction center protein Psb30.